Here is a 741-residue protein sequence, read N- to C-terminus: D-(-)-3-hydroxybutyrate oligomer hydrolase (741 aa).

The signal sequence occupies residues 1 to 23 (MKTIQGKSPGRWYSRGMLLAAMA). The tract at residues 45 to 68 (NGNAGGNGNNNGNNNGNTVSNTKP) is disordered. Ser338 serves as the catalytic Charge relay system.

The protein belongs to the D-(-)-3-hydroxybutyrate oligomer hydrolase family.

The protein resides in the secreted. The catalysed reaction is (3R)-hydroxybutanoate dimer + H2O = 2 (R)-3-hydroxybutanoate + H(+). It functions in the pathway lipid metabolism; butanoate metabolism. Its function is as follows. Participates in the degradation of poly-3-hydroxybutyrate (PHB). It works downstream of poly(3-hydroxybutyrate) depolymerase, hydrolyzing D(-)-3-hydroxybutyrate oligomers of various length (3HB-oligomers) into 3HB-monomers. This is D-(-)-3-hydroxybutyrate oligomer hydrolase from Ralstonia pickettii (Burkholderia pickettii).